The chain runs to 200 residues: UPF0301 protein BR0480/BS1330_I0481 (200 aa).

It belongs to the UPF0301 (AlgH) family.

The protein is UPF0301 protein BR0480/BS1330_I0481 of Brucella suis biovar 1 (strain 1330).